A 559-amino-acid polypeptide reads, in one-letter code: MAAQGFLLIASFLLLLFLLARPLGNVLARMINGVPLPLVGGVENGVWRVLGIQNQEMNWRQYLLAILLLNVFGLFVLFAMLMLQGILPLNPQQLPGLSWHLALNTAVSFVSNTNWQSYAGETTLSYFSQMVGLTVQNFLSAASGIAVIFALTRAFARQKVNTLGNAWVDLTRITLWVLLPISLVIALFFIQQGTLQNLLPYASYTSLEGVKQMLPMGPVASQEAIKMLGTNGGGFFNANSSHPFENPTALTNFVQMLAIFLIPAALCFAFGDVVNDRRQGRTLLWAMSLIFVVCAALVMWAEWHGNAHFMQLGVDSNINMEGKESRFGILASSLYAVVTTAASCGAVNAMHDSFTALGGMIPLWLMQIGEVVFGGVGSGLYGMLLFVLLAVFIAGLMIGRTPEYLGKKIDVREMKLTALAILVTPALVLMGTALALMTDAGRSGIFNPGIHGFSEVLYAVSSAANNNGSAFAGLSANSPFWNCLLAFCMFVGRFGVIVPVMAIAGSLVSKNIQPTSSGTLPTHGALFVGLLIGTVLLVGALTFIPALALGPVAEHLSLR.

The next 12 membrane-spanning stretches (helical) occupy residues 6–26 (FLLI…LGNV), 63–83 (LLAI…MLML), 131–151 (VGLT…IFAL), 173–193 (ITLW…IQQG), 253–273 (FVQM…FGDV), 283–303 (LLWA…WAEW), 327–347 (FGIL…CGAV), 356–376 (ALGG…FGGV), 379–399 (GLYG…LMIG), 416–436 (LTAL…ALAL), 484–504 (LLAF…MAIA), and 524–544 (GALF…LTFI).

It belongs to the KdpA family. The system is composed of three essential subunits: KdpA, KdpB and KdpC.

The protein resides in the cell inner membrane. In terms of biological role, part of the high-affinity ATP-driven potassium transport (or Kdp) system, which catalyzes the hydrolysis of ATP coupled with the electrogenic transport of potassium into the cytoplasm. This subunit binds the periplasmic potassium ions and delivers the ions to the membrane domain of KdpB through an intramembrane tunnel. The chain is Potassium-transporting ATPase potassium-binding subunit from Enterobacter sp. (strain 638).